The sequence spans 388 residues: Formate-dependent phosphoribosylglycinamide formyltransferase (388 aa).

N(1)-(5-phospho-beta-D-ribosyl)glycinamide-binding positions include 20 to 21 (EL) and glutamate 80. ATP is bound by residues arginine 112, lysine 153, 158–163 (SSGKGQ), 193–196 (EEFV), and glutamate 201. Residues 117–306 (RLASEKLGLR…EFEIHVRSIL (190 aa)) form the ATP-grasp domain. The Mg(2+) site is built by glutamate 265 and glutamate 277. N(1)-(5-phospho-beta-D-ribosyl)glycinamide contacts are provided by residues aspartate 284, lysine 352, and 359–360 (RR).

It belongs to the PurK/PurT family. As to quaternary structure, homodimer.

It carries out the reaction N(1)-(5-phospho-beta-D-ribosyl)glycinamide + formate + ATP = N(2)-formyl-N(1)-(5-phospho-beta-D-ribosyl)glycinamide + ADP + phosphate + H(+). Its pathway is purine metabolism; IMP biosynthesis via de novo pathway; N(2)-formyl-N(1)-(5-phospho-D-ribosyl)glycinamide from N(1)-(5-phospho-D-ribosyl)glycinamide (formate route): step 1/1. Involved in the de novo purine biosynthesis. Catalyzes the transfer of formate to 5-phospho-ribosyl-glycinamide (GAR), producing 5-phospho-ribosyl-N-formylglycinamide (FGAR). Formate is provided by PurU via hydrolysis of 10-formyl-tetrahydrofolate. This chain is Formate-dependent phosphoribosylglycinamide formyltransferase, found in Methanococcus vannielii (strain ATCC 35089 / DSM 1224 / JCM 13029 / OCM 148 / SB).